A 499-amino-acid polypeptide reads, in one-letter code: Lysine--tRNA ligase (499 aa).

The Mg(2+) site is built by E408 and E415.

It belongs to the class-II aminoacyl-tRNA synthetase family. In terms of assembly, homodimer. Mg(2+) is required as a cofactor.

It localises to the cytoplasm. The catalysed reaction is tRNA(Lys) + L-lysine + ATP = L-lysyl-tRNA(Lys) + AMP + diphosphate. This chain is Lysine--tRNA ligase, found in Bacillus cereus (strain B4264).